The primary structure comprises 269 residues: Ribonuclease HII (269 aa).

The region spanning 28-222 (RHVAGADEAG…VSGRRGAPPR (195 aa)) is the RNase H type-2 domain. 3 residues coordinate a divalent metal cation: Asp-34, Glu-35, and Asp-128.

The protein belongs to the RNase HII family. Requires Mn(2+) as cofactor. Mg(2+) is required as a cofactor.

Its subcellular location is the cytoplasm. It carries out the reaction Endonucleolytic cleavage to 5'-phosphomonoester.. Its function is as follows. Endonuclease that specifically degrades the RNA of RNA-DNA hybrids. This chain is Ribonuclease HII, found in Salinispora arenicola (strain CNS-205).